The primary structure comprises 637 residues: Zinc finger protein rsv2 (637 aa).

Disordered regions lie at residues 1–41, 145–164, 169–207, 221–363, 404–427, and 440–558; these read MDTT…SKMN, SNHQ…PTSA, IITA…QPFS, TGAI…STAL, QDSF…TRSY, and SVNP…GAQR. Over residues 172 to 189 the composition is skewed to low complexity; sequence ANSSPSGNAGSNASASMS. Residues 196–207 are compositionally biased toward polar residues; sequence PSASTINDQPFS. The span at 279 to 296 shows a compositional bias: basic and acidic residues; the sequence is SDLKRSLGHNQKSDRVSK. The segment covering 298–344 has biased composition (polar residues); the sequence is VSPQHQANPSTLNNPLKTQNFDSSKNLYTDNKDSSLVSPTGLQSRME. Basic and acidic residues-rich tracts occupy residues 345 to 355 and 404 to 413; these read QNPEVRAHPMK and QDSFNKESIK. Positions 455–471 are enriched in low complexity; sequence VPSNTTISSSPPLTSPV. Composition is skewed to polar residues over residues 472–498 and 508–527; these read KTSA…QSAA and YYNT…QKVS. The span at 544–554 shows a compositional bias: low complexity; that stretch reads TTPTNSSTTAT. Residues 572-603 form a C2H2-type 1 zinc finger; the sequence is VRCTLQNRVTGEICNTVFSRTYDLIRHQDTIH. Residues 610–635 form a C2H2-type 2; degenerate zinc finger; it reads FRCEICGDQRHFSRHDALVRHLRVKH.

It is found in the nucleus. The polypeptide is Zinc finger protein rsv2 (rsv2) (Schizosaccharomyces pombe (strain 972 / ATCC 24843) (Fission yeast)).